Here is a 252-residue protein sequence, read N- to C-terminus: Flavin-dependent thymidylate synthase (252 aa).

The ThyX domain occupies 7–235; that stretch reads LDVQLVACST…PTVFSDFETS (229 aa). DUMP-binding positions include 94 to 97, 105 to 109, and Arg174; these read ELVR and QLSQR. Residues 97–99 and Gln105 contribute to the FAD site; that span reads RHR. The ThyX motif motif lies at 97 to 107; the sequence is RHRHFSFSQLS. FAD-binding positions include 190-192 and His196; that span reads NFR. Arg201 contacts dUMP. Arg201 (involved in ionization of N3 of dUMP, leading to its activation) is an active-site residue.

The protein belongs to the thymidylate synthase ThyX family. Homotetramer. FAD serves as cofactor.

The enzyme catalyses dUMP + (6R)-5,10-methylene-5,6,7,8-tetrahydrofolate + NADPH + H(+) = dTMP + (6S)-5,6,7,8-tetrahydrofolate + NADP(+). It functions in the pathway pyrimidine metabolism; dTTP biosynthesis. Catalyzes the reductive methylation of 2'-deoxyuridine-5'-monophosphate (dUMP) to 2'-deoxythymidine-5'-monophosphate (dTMP) while utilizing 5,10-methylenetetrahydrofolate (mTHF) as the methyl donor, and NADPH and FADH(2) as the reductant. In Corynebacterium diphtheriae (strain ATCC 700971 / NCTC 13129 / Biotype gravis), this protein is Flavin-dependent thymidylate synthase.